Here is a 117-residue protein sequence, read N- to C-terminus: Large ribosomal subunit protein bL19 (117 aa).

It belongs to the bacterial ribosomal protein bL19 family.

In terms of biological role, this protein is located at the 30S-50S ribosomal subunit interface and may play a role in the structure and function of the aminoacyl-tRNA binding site. In Rhodopirellula baltica (strain DSM 10527 / NCIMB 13988 / SH1), this protein is Large ribosomal subunit protein bL19.